A 249-amino-acid chain; its full sequence is Acidic leucine-rich nuclear phosphoprotein 32 family member A (249 aa).

T15 carries the post-translational modification Phosphothreonine. S17 is modified (phosphoserine). LRR repeat units follow at residues 18 to 41 (DVKELVLDNCRSIEGKIEGLTDEF), 43 to 64 (ELEFLSTINVGLTSVANLPKLN), 65 to 87 (KLKKLELSDNRISGGLEVLAEKC), and 89 to 110 (NLTHLNLSGNKIKDLSTIEPLK). Residues 123–161 (CEVTNLNDYRENVFKLLPQLTYLDGYDRDDKEAPDSDAE) enclose the LRRCT domain. Positions 147–156 (GYDRDDKEAP) are enriched in basic and acidic residues. Residues 147-249 (GYDRDDKEAP…EPXDXGEDDD (103 aa)) form a disordered region. Positions 150-174 (RDDKEAPDSDAEGYVEGLDDDEEDE) are necessary for tumor-suppressive function. Positions 157–230 (DSDAEGYVEG…DEEDEEDVGE (74 aa)) are enriched in acidic residues. Residues S158 and S204 each carry the phosphoserine modification. Residues 165-249 (EGLDDDEEDE…EPXDXGEDDD (85 aa)) form an interaction with E4F1 region.

Belongs to the ANP32 family. In terms of assembly, component of the SET complex, composed of at least ANP32A, APEX1, HMGB2, NME1, SET and TREX1. Directly interacts with SET. Interacts with ATXN1/SCA1. Interacts with MAP1B. Interacts with ELAVL1. Part of the INHAT (inhibitor of histone acetyltransferases) complex. Interacts with E4F1. In terms of processing, phosphorylated on serine residues, at least in part by casein kinase 2/CK2. Post-translationally, some glutamate residues are glycylated by TTLL8. This modification occurs exclusively on glutamate residues and results in a glycine chain on the gamma-carboxyl group.

The protein resides in the nucleus. The protein localises to the cytoplasm. Its subcellular location is the endoplasmic reticulum. Its function is as follows. Multifunctional protein that is involved in the regulation of many processes including tumor suppression, apoptosis, cell cycle progression or transcription. Promotes apoptosis by favouring the activation of caspase-9/CASP9 and allowing apoptosome formation. In addition, plays a role in the modulation of histone acetylation and transcription as part of the INHAT (inhibitor of histone acetyltransferases) complex. Inhibits the histone-acetyltranferase activity of EP300/CREBBP (CREB-binding protein) and EP300/CREBBP-associated factor by histone masking. Preferentially binds to unmodified histone H3 and sterically inhibiting its acetylation and phosphorylation leading to cell growth inhibition. Participates in other biochemical processes such as regulation of mRNA nuclear-to-cytoplasmic translocation and stability by its association with ELAVL1 (Hu-antigen R). Plays a role in E4F1-mediated transcriptional repression as well as inhibition of protein phosphatase 2A. The chain is Acidic leucine-rich nuclear phosphoprotein 32 family member A (ANP32A) from Canis lupus familiaris (Dog).